The following is a 310-amino-acid chain: Aspartate carbamoyltransferase catalytic subunit (310 aa).

Carbamoyl phosphate is bound by residues Arg58 and Thr59. Lys86 serves as a coordination point for L-aspartate. Carbamoyl phosphate contacts are provided by Arg108, His136, and Gln139. Positions 169 and 224 each coordinate L-aspartate. 2 residues coordinate carbamoyl phosphate: Gly265 and Pro266.

Belongs to the aspartate/ornithine carbamoyltransferase superfamily. ATCase family. As to quaternary structure, heterododecamer (2C3:3R2) of six catalytic PyrB chains organized as two trimers (C3), and six regulatory PyrI chains organized as three dimers (R2).

It catalyses the reaction carbamoyl phosphate + L-aspartate = N-carbamoyl-L-aspartate + phosphate + H(+). Its pathway is pyrimidine metabolism; UMP biosynthesis via de novo pathway; (S)-dihydroorotate from bicarbonate: step 2/3. Catalyzes the condensation of carbamoyl phosphate and aspartate to form carbamoyl aspartate and inorganic phosphate, the committed step in the de novo pyrimidine nucleotide biosynthesis pathway. This Geobacter sp. (strain M21) protein is Aspartate carbamoyltransferase catalytic subunit.